The chain runs to 296 residues: Regulatory protein PchR (296 aa).

The HTH araC/xylS-type domain maps to 201-296; that stretch reads HAARDLLVGA…RYGISPSEIR (96 aa). DNA-binding regions (H-T-H motif) lie at residues 218–239 and 266–288; these read DTLASRVGMNPRKLTAGFRKVF and VSTVAYRVGYSPAHFSIAFRKRY.

Positive activator of the genes for pyochelin and ferripyochelin receptors. This Pseudomonas aeruginosa (strain ATCC 15692 / DSM 22644 / CIP 104116 / JCM 14847 / LMG 12228 / 1C / PRS 101 / PAO1) protein is Regulatory protein PchR (pchR).